Here is a 122-residue protein sequence, read N- to C-terminus: Small ribosomal subunit protein uS13 (122 aa).

Residues Arg-93–Lys-122 form a disordered region.

Belongs to the universal ribosomal protein uS13 family. Part of the 30S ribosomal subunit. Forms a loose heterodimer with protein S19. Forms two bridges to the 50S subunit in the 70S ribosome.

Its function is as follows. Located at the top of the head of the 30S subunit, it contacts several helices of the 16S rRNA. In the 70S ribosome it contacts the 23S rRNA (bridge B1a) and protein L5 of the 50S subunit (bridge B1b), connecting the 2 subunits; these bridges are implicated in subunit movement. Contacts the tRNAs in the A and P-sites. The protein is Small ribosomal subunit protein uS13 of Clostridium beijerinckii (strain ATCC 51743 / NCIMB 8052) (Clostridium acetobutylicum).